The chain runs to 737 residues: Catalase-peroxidase (737 aa).

Residues 102–225 constitute a cross-link (tryptophyl-tyrosyl-methioninium (Trp-Tyr) (with M-251)); it reads WHSAGTYRTG…LGAVQMGLIY (124 aa). H103 acts as the Proton acceptor in catalysis. Positions 225–251 form a cross-link, tryptophyl-tyrosyl-methioninium (Tyr-Met) (with W-102); sequence YVNPEGPNGKPDPLAAAHDIRETFARM. Residue H266 participates in heme b binding.

This sequence belongs to the peroxidase family. Peroxidase/catalase subfamily. Homodimer or homotetramer. The cofactor is heme b. Formation of the three residue Trp-Tyr-Met cross-link is important for the catalase, but not the peroxidase activity of the enzyme.

The catalysed reaction is H2O2 + AH2 = A + 2 H2O. It carries out the reaction 2 H2O2 = O2 + 2 H2O. Its function is as follows. Bifunctional enzyme with both catalase and broad-spectrum peroxidase activity. In Caulobacter sp. (strain K31), this protein is Catalase-peroxidase.